Here is a 184-residue protein sequence, read N- to C-terminus: Photosystem I assembly protein Ycf4 (184 aa).

Transmembrane regions (helical) follow at residues Phe-22 to Ser-42 and Ile-57 to Ser-77.

The protein belongs to the Ycf4 family.

Its subcellular location is the plastid. It localises to the chloroplast thylakoid membrane. Seems to be required for the assembly of the photosystem I complex. The sequence is that of Photosystem I assembly protein Ycf4 from Olimarabidopsis pumila (Dwarf rocket).